The chain runs to 332 residues: T-cell surface glycoprotein CD1b2 (332 aa).

The N-terminal stretch at 1-17 (MLLLVLALLAVLFPAGD) is a signal peptide. Residues 18 to 301 (TQDAFPEPIS…ILYWGNSSIG (284 aa)) are Extracellular-facing. 3 N-linked (GlcNAc...) asparagine glycosylation sites follow: N38, N75, and N146. 3 disulfide bridges follow: C120/C184, C149/C163, and C224/C279. The Ig-like domain occupies 185-295 (PRYLMSVLEA…LGGQDIILYW (111 aa)). Residue N297 is glycosylated (N-linked (GlcNAc...) asparagine). The helical transmembrane segment at 302–322 (WIILAVFVSCLIVLLFYVLWF) threads the bilayer. The Cytoplasmic segment spans residues 323–332 (YKHWSYQDIL). An Internalization signal motif is present at residues 328–331 (YQDI).

Heterodimer with B2M (beta-2-microglobulin). Interacts with saposin C.

It is found in the cell membrane. The protein localises to the endosome membrane. Its subcellular location is the lysosome membrane. Antigen-presenting protein that binds self and non-self lipid and glycolipid antigens and presents them to T-cell receptors on natural killer T-cells. This Cavia porcellus (Guinea pig) protein is T-cell surface glycoprotein CD1b2 (CD1B2).